The chain runs to 568 residues: PCNA-interacting partner (568 aa).

The segment at 442–555 (QIPTCVHPAP…RNNKAVSKKL (114 aa)) is disordered. Residues 488–500 (NAWNQTGGKSTQP) are compositionally biased toward polar residues. A compositionally biased stretch (basic and acidic residues) spans 515-527 (ANRECTEQGREEN).

It belongs to the PARI family.

The protein localises to the cytoplasm. The protein resides in the nucleus. Functionally, required to suppress inappropriate homologous recombination, thereby playing a central role DNA repair and in the maintenance of genomic stability. The protein is PCNA-interacting partner (parpbp) of Danio rerio (Zebrafish).